Reading from the N-terminus, the 407-residue chain is Phosphopentomutase (407 aa).

Mn(2+) contacts are provided by aspartate 10, aspartate 306, histidine 311, aspartate 347, histidine 348, and histidine 359.

The protein belongs to the phosphopentomutase family. It depends on Mn(2+) as a cofactor.

It localises to the cytoplasm. The enzyme catalyses 2-deoxy-alpha-D-ribose 1-phosphate = 2-deoxy-D-ribose 5-phosphate. It catalyses the reaction alpha-D-ribose 1-phosphate = D-ribose 5-phosphate. The protein operates within carbohydrate degradation; 2-deoxy-D-ribose 1-phosphate degradation; D-glyceraldehyde 3-phosphate and acetaldehyde from 2-deoxy-alpha-D-ribose 1-phosphate: step 1/2. Its function is as follows. Isomerase that catalyzes the conversion of deoxy-ribose 1-phosphate (dRib-1-P) and ribose 1-phosphate (Rib-1-P) to deoxy-ribose 5-phosphate (dRib-5-P) and ribose 5-phosphate (Rib-5-P), respectively. In Cronobacter sakazakii (strain ATCC BAA-894) (Enterobacter sakazakii), this protein is Phosphopentomutase.